Reading from the N-terminus, the 442-residue chain is 3-phosphoshikimate 1-carboxyvinyltransferase (442 aa).

Lys27, Ser28, and Arg32 together coordinate 3-phosphoshikimate. Lys27 contacts phosphoenolpyruvate. The phosphoenolpyruvate site is built by Gly100 and Arg128. The 3-phosphoshikimate site is built by Ser174, Ser175, Gln176, Ser204, Asp321, and Lys348. Gln176 provides a ligand contact to phosphoenolpyruvate. Asp321 functions as the Proton acceptor in the catalytic mechanism. The phosphoenolpyruvate site is built by Arg352, Arg394, and Lys424.

This sequence belongs to the EPSP synthase family. As to quaternary structure, monomer.

Its subcellular location is the cytoplasm. It catalyses the reaction 3-phosphoshikimate + phosphoenolpyruvate = 5-O-(1-carboxyvinyl)-3-phosphoshikimate + phosphate. The protein operates within metabolic intermediate biosynthesis; chorismate biosynthesis; chorismate from D-erythrose 4-phosphate and phosphoenolpyruvate: step 6/7. Its function is as follows. Catalyzes the transfer of the enolpyruvyl moiety of phosphoenolpyruvate (PEP) to the 5-hydroxyl of shikimate-3-phosphate (S3P) to produce enolpyruvyl shikimate-3-phosphate and inorganic phosphate. In Herminiimonas arsenicoxydans, this protein is 3-phosphoshikimate 1-carboxyvinyltransferase.